The sequence spans 497 residues: Glycerol kinase (497 aa).

Residue Thr21 participates in ADP binding. Residues Thr21 and Thr22 each coordinate ATP. Position 21 (Thr21) interacts with sn-glycerol 3-phosphate. Position 25 (Arg25) interacts with ADP. Arg88, Glu89, Tyr140, and Asp244 together coordinate sn-glycerol 3-phosphate. The glycerol site is built by Arg88, Glu89, Tyr140, Asp244, and Gln245. Thr266 and Gly309 together coordinate ADP. ATP-binding residues include Thr266, Gly309, Gln313, and Gly410. ADP-binding residues include Gly410 and Asn414.

The protein belongs to the FGGY kinase family.

It carries out the reaction glycerol + ATP = sn-glycerol 3-phosphate + ADP + H(+). It participates in polyol metabolism; glycerol degradation via glycerol kinase pathway; sn-glycerol 3-phosphate from glycerol: step 1/1. Inhibited by fructose 1,6-bisphosphate (FBP). Functionally, key enzyme in the regulation of glycerol uptake and metabolism. Catalyzes the phosphorylation of glycerol to yield sn-glycerol 3-phosphate. In Gloeobacter violaceus (strain ATCC 29082 / PCC 7421), this protein is Glycerol kinase.